A 335-amino-acid chain; its full sequence is Vitamin B12 import system permease protein BtuC (335 aa).

A run of 9 helical transmembrane segments spans residues 21–43, 63–82, 95–114, 119–141, 153–175, 195–212, 244–266, 281–303, and 310–329; these read FLAI…GENW, FPRV…AGAV, GLLG…VLMF, PFWL…LLTF, LLVG…YFST, WRHQ…IWLS, FAVG…IGLV, TLLP…LSRL, and VPIG…WLLL.

This sequence belongs to the binding-protein-dependent transport system permease family. FecCD subfamily. The complex is composed of two ATP-binding proteins (BtuD), two transmembrane proteins (BtuC) and a solute-binding protein (BtuF).

The protein localises to the cell inner membrane. In terms of biological role, part of the ABC transporter complex BtuCDF involved in vitamin B12 import. Involved in the translocation of the substrate across the membrane. In Photorhabdus laumondii subsp. laumondii (strain DSM 15139 / CIP 105565 / TT01) (Photorhabdus luminescens subsp. laumondii), this protein is Vitamin B12 import system permease protein BtuC.